The primary structure comprises 304 residues: Ribosomal RNA small subunit methyltransferase H (304 aa).

S-adenosyl-L-methionine contacts are provided by residues 37–39 (GGH), D57, F79, D100, and H107.

It belongs to the methyltransferase superfamily. RsmH family.

The protein resides in the cytoplasm. The catalysed reaction is cytidine(1402) in 16S rRNA + S-adenosyl-L-methionine = N(4)-methylcytidine(1402) in 16S rRNA + S-adenosyl-L-homocysteine + H(+). Its function is as follows. Specifically methylates the N4 position of cytidine in position 1402 (C1402) of 16S rRNA. The sequence is that of Ribosomal RNA small subunit methyltransferase H from Bacteroides fragilis (strain ATCC 25285 / DSM 2151 / CCUG 4856 / JCM 11019 / LMG 10263 / NCTC 9343 / Onslow / VPI 2553 / EN-2).